Reading from the N-terminus, the 86-residue chain is Haditoxin (86 aa).

A signal peptide spans 1 to 21 (MKTLLLTLVVVTIVYLDLGYT). 4 disulfides stabilise this stretch: Cys-24/Cys-45, Cys-38/Cys-62, Cys-66/Cys-78, and Cys-79/Cys-84.

The protein belongs to the three-finger toxin family. Short-chain subfamily. Orphan group VIII (haditoxin) sub-subfamily. Homodimer; non-covalently linked. Expressed by the venom gland.

It localises to the secreted. Its function is as follows. Antagonist of muscle (alpha-1-beta-1-delta-epsilon/CHRNA1-CHRNB1-CHRND-CHRNE) and neuronal (alpha-7/CHRNA7, alpha-3-beta-2/CHRNA3-CHRNB2, alpha-4-beta-2/CHRNA4-CHRNB2) nicotinic acetylcholine receptors (nAChR). The highest affinity is for human alpha-7/CHRNA7 nAChRs (IC(50)=180 nM), compared to human alpha-1-beta-1-delta-epsilon/CHRNA1-CHRNB1-CHRND-CHRNE nAChR (IC(50)= 550 nM), alpha-3-beta-2/CHRNA3-CHRNB2 nAChR (IC(50)=500 nM), and alpha-4-beta-2/CHRNA4-CHRNB2 nAChR (IC(50)=2.6 uM). The protein is Haditoxin of Ophiophagus hannah (King cobra).